Consider the following 128-residue polypeptide: Early E3 14.5 kDa protein (128 aa).

Belongs to the adenoviridae E3_15 family.

In terms of biological role, protects virus-infected cells from TNF-induced cytolysis. This Human adenovirus C serotype 5 (HAdV-5) protein is Early E3 14.5 kDa protein.